Consider the following 324-residue polypeptide: mRNA decay activator protein ZFP36 (324 aa).

The necessary for nuclear export stretch occupies residues 1–15 (MDLAAIYKSLLSLSP). Residues 1 to 98 (MDLAAIYKSL…PTSPTATPTT (98 aa)) form a necessary and sufficient for the association with mRNA decay enzymes and mRNA decay activation region. Necessary for localization of ARE-containing mRNAs to processing bodies (PBs) regions lie at residues 1–172 (MDLA…DLAA) and 98–324 (TSSR…SVSE). A compositionally biased stretch (low complexity) spans 15–46 (PELPSDLGETESSTSWASSGPWSLSSSDSSLP). Residues 15-50 (PELPSDLGETESSTSWASSGPWSLSSSDSSLPEVAA) form a disordered region. Residue Ser-58 is modified to Phosphoserine; by MAPKAPK2. Ser-64 is modified (phosphoserine). The stretch at 69-73 (PPPPG) is one P-P-P-P-G repeat. Positions 76–100 (PLAPRPSSDWSPSPTSPTATPTTSS) are disordered. A phosphoserine mark is found at Ser-86 and Ser-88. Phosphothreonine is present on Thr-90. Ser-91 is modified (phosphoserine). The interval 93-166 (TATPTTSSRY…GSRCHFIHNP (74 aa)) is necessary for nuclear localization. Residues 95-171 (TPTTSSRYKT…FIHNPSEDLA (77 aa)) are necessary for RNA-binding. 2 C3H1-type zinc fingers span residues 101–129 (RYKT…HGLG) and 139–167 (KYKT…HNPS). Residues 101 to 192 (RYKTELCRTF…ISFSGLPSGR (92 aa)) are necessary for interaction with PABPN1. At Ser-167 the chain carries Phosphoserine. A necessary for mRNA decay activation region spans residues 172–324 (APGHPHVLRQ…PIFNRISVSE (153 aa)). Ser-184 carries the post-translational modification Phosphoserine; by MAPKAPK2. Disordered regions lie at residues 185 to 227 (FSGL…LLLS) and 270 to 324 (PSAH…SVSE). Ser-195 carries the post-translational modification Phosphoserine. The stretch at 196-200 (PPPAS) is one P-P-P-P-G repeat. Low complexity predominate over residues 204 to 214 (PSVSSWSFSPS). Phosphoserine is present on Ser-216. Residues 218-222 (PPPPG) form a P-P-P-P-G repeat. Ser-227 is modified (phosphoserine; by MAPK1; in vitro). Phosphoserine is present on residues Ser-274, Ser-294, and Ser-321. The segment at 310–324 (APRRLPIFNRISVSE) is interaction with CNOT1.

Associates with cytoplasmic CCR4-NOT and PAN2-PAN3 deadenylase complexes to trigger ARE-containing mRNA deadenylation and decay processes. Part of a mRNA decay activation complex at least composed of poly(A)-specific exoribonucleases CNOT6, EXOSC2 and XRN1 and mRNA-decapping enzymes DCP1A and DCP2. Associates with the RNA exosome complex. Interacts (via phosphorylated form) with 14-3-3 proteins; these interactions promote exclusion of ZFP36 from cytoplasmic stress granules in response to arsenite treatment in a MAPKAPK2-dependent manner and does not prevent CCR4-NOT deadenylase complex recruitment or ZFP36-induced ARE-containing mRNA deadenylation and decay processes. Interacts with 14-3-3 proteins; these interactions occur in response to rapamycin in an Akt-dependent manner. Interacts with AGO2 and AGO4. Interacts (via C-terminus) with CNOT1; this interaction occurs in a RNA-independent manner and induces mRNA deadenylation. Interacts (via N-terminus) with CNOT6. Interacts with CNOT6L. Interacts (via C-terminus) with CNOT7; this interaction occurs in a RNA-independent manner, induces mRNA deadenylation and is inhibited in a phosphorylation MAPKAPK2-dependent manner. Interacts (via unphosphorylated form) with CNOT8; this interaction occurs in a RNA-independent manner and is inhibited in a phosphorylation MAPKAPK2-dependent manner. Interacts with DCP1A. Interacts (via N-terminus) with DCP2. Interacts with EDC3. Interacts (via N-terminus) with EXOSC2. Interacts with heat shock 70 kDa proteins. Interacts with KHSRP; this interaction increases upon cytokine-induced treatment. Interacts with MAP3K4; this interaction enhances the association with SH3KBP1/CIN85. Interacts with MAPKAPK2; this interaction occurs upon skeletal muscle satellite cell activation. Interacts with NCL. Interacts with NUP214; this interaction increases upon lipopolysaccharide (LPS) stimulation. Interacts with PABPC1; this interaction occurs in a RNA-dependent manner. Interacts (via hypophosphorylated form) with PABPN1 (via RRM domain and C-terminal arginine-rich region); this interaction occurs in the nucleus in a RNA-independent manner, decreases in presence of single-stranded poly(A) RNA-oligomer and in a p38 MAPK-dependent-manner and inhibits nuclear poly(A) tail synthesis. Interacts with PAN2. Interacts (via C3H1-type zinc finger domains) with PKM. Interacts (via C3H1-type zinc finger domains) with nuclear RNA poly(A) polymerase. Interacts with PPP2CA; this interaction occurs in LPS-stimulated cells and induces ZFP36 dephosphorylation, and hence may promote ARE-containing mRNAs decay. Interacts (via C-terminus) with PRR5L (via C-terminus); this interaction may accelerate ZFP36-mediated mRNA decay during stress. Interacts (via C-terminus) with SFN; this interaction occurs in a phosphorylation-dependent manner. Interacts (via extreme C-terminal region) with SH3KBP1/CIN85 (via SH3 domains); this interaction enhances MAP3K4-induced phosphorylation of ZFP36 at Ser-64 and Ser-91 and does not alter neither ZFP36 binding to ARE-containing transcripts nor TNF-alpha mRNA decay. Interacts with XRN1. Interacts (via C-terminus and Ser-184 phosphorylated form) with YWHAB; this interaction occurs in a p38/MAPKAPK2-dependent manner, increases cytoplasmic localization of ZFP36 and protects ZFP36 from Ser-184 dephosphorylation by serine/threonine phosphatase 2A, and hence may be crucial for stabilizing ARE-containing mRNAs. Interacts (via phosphorylated form) with YWHAE. Interacts (via C-terminus) with YWHAG; this interaction occurs in a phosphorylation-dependent manner. Interacts with YWHAH; this interaction occurs in a phosphorylation-dependent manner. Interacts with YWHAQ; this interaction occurs in a phosphorylation-dependent manner. Interacts with (via C-terminus) YWHAZ; this interaction occurs in a phosphorylation-dependent manner. Does not interact with SH3KBP1. Interacts (via P-P-P-P-G repeats) with GIGYF2; the interaction is direct. In terms of processing, phosphorylated. Phosphorylation at serine and/or threonine residues occurs in a p38 MAPK- and MAPKAPK2-dependent manner. Phosphorylated by MAPKAPK2 at Ser-58 and Ser-184; phosphorylation increases its stability and cytoplasmic localization, promotes binding to 14-3-3 adapter proteins and inhibits the recruitment of cytoplasmic CCR4-NOT and PAN2-PAN3 deadenylase complexes to the mRNA decay machinery, thereby inhibiting ZFP36-induced ARE-containing mRNA deadenylation and decay processes. Phosphorylation by MAPKAPK2 does not impair ARE-containing RNA-binding. Phosphorylated in a MAPKAPK2- and p38 MAPK-dependent manner upon skeletal muscle satellite cell activation; this phosphorylation inhibits ZFP36-mediated mRNA decay activity, and hence stabilizes MYOD1 mRNA. Phosphorylated by MAPK1 upon mitogen stimulation. Phosphorylated at Ser-64 and Ser-91; these phosphorylations increase in a SH3KBP1-dependent manner. Phosphorylated at serine and threonine residues in a pyruvate kinase PKM- and p38 MAPK-dependent manner. Phosphorylation at Ser-58 may participate in the PKM-mediated degradation of ZFP36 in a p38 MAPK-dependent manner. Dephosphorylated by serine/threonine phosphatase 2A at Ser-184. Ubiquitinated; pyruvate kinase (PKM)-dependent ubiquitination leads to proteasomal degradation through a p38 MAPK signaling pathway.

The protein resides in the nucleus. Its subcellular location is the cytoplasm. The protein localises to the cytoplasmic granule. It localises to the P-body. In terms of biological role, zinc-finger RNA-binding protein that destabilizes numerous cytoplasmic AU-rich element (ARE)-containing mRNA transcripts by promoting their poly(A) tail removal or deadenylation, and hence provide a mechanism for attenuating protein synthesis. Acts as an 3'-untranslated region (UTR) ARE mRNA-binding adapter protein to communicate signaling events to the mRNA decay machinery. Recruits deadenylase CNOT7 (and probably the CCR4-NOT complex) via association with CNOT1, and hence promotes ARE-mediated mRNA deadenylation. Also functions by recruiting components of the cytoplasmic RNA decay machinery to the bound ARE-containing mRNAs. Self regulates by destabilizing its own mRNA. Binds to 3'-UTR ARE of numerous mRNAs. Also binds to ARE of its own mRNA. Plays a role in anti-inflammatory responses; suppresses tumor necrosis factor (TNF)-alpha production by stimulating ARE-mediated TNF-alpha mRNA decay and several other inflammatory ARE-containing mRNAs in interferon (IFN)- and/or lipopolysaccharide (LPS)-induced macrophages. Also plays a role in the regulation of dendritic cell maturation at the post-transcriptional level, and hence operates as part of a negative feedback loop to limit the inflammatory response. Promotes ARE-mediated mRNA decay of hypoxia-inducible factor HIF1A mRNA during the response of endothelial cells to hypoxia. Positively regulates early adipogenesis of preadipocytes by promoting ARE-mediated mRNA decay of immediate early genes (IEGs). Negatively regulates hematopoietic/erythroid cell differentiation by promoting ARE-mediated mRNA decay of the transcription factor STAT5B mRNA. Plays a role in maintaining skeletal muscle satellite cell quiescence by promoting ARE-mediated mRNA decay of the myogenic determination factor MYOD1 mRNA. Also associates with and regulates the expression of non-ARE-containing target mRNAs at the post-transcriptional level, such as MHC class I mRNAs. Participates in association with argonaute RISC catalytic components in the ARE-mediated mRNA decay mechanism; assists microRNA (miRNA) targeting ARE-containing mRNAs. May also play a role in the regulation of cytoplasmic mRNA decapping; enhances decapping of ARE-containing RNAs, in vitro. Involved in the delivery of target ARE-mRNAs to processing bodies (PBs). In addition to its cytosolic mRNA-decay function, affects nuclear pre-mRNA processing. Negatively regulates nuclear poly(A)-binding protein PABPN1-stimulated polyadenylation activity on ARE-containing pre-mRNA during LPS-stimulated macrophages. Also involved in the regulation of stress granule (SG) and P-body (PB) formation and fusion. Plays a role in the regulation of keratinocyte proliferation, differentiation and apoptosis. Plays a role as a tumor suppressor by inhibiting cell proliferation in breast cancer cells. This is mRNA decay activator protein ZFP36 from Bos taurus (Bovine).